The following is a 590-amino-acid chain: Transcription factor GTE7 (590 aa).

Positions L125–P160 are disordered. The Bromo domain occupies K164 to A270. Disordered stretches follow at residues T282–N400 and R476–C590. Residues P288–Q298 show a composition bias toward basic and acidic residues. The segment covering P347–Q369 has biased composition (pro residues). The 82-residue stretch at P394–K475 folds into the NET domain. Over residues S498–A508 the composition is skewed to basic and acidic residues. Residues G509–I521 are compositionally biased toward acidic residues. A compositionally biased stretch (low complexity) spans A537–S562.

Its subcellular location is the nucleus. The polypeptide is Transcription factor GTE7 (GTE7) (Arabidopsis thaliana (Mouse-ear cress)).